Here is a 368-residue protein sequence, read N- to C-terminus: Histidinol-phosphate aminotransferase 1 (368 aa).

At Lys-224 the chain carries N6-(pyridoxal phosphate)lysine.

Belongs to the class-II pyridoxal-phosphate-dependent aminotransferase family. Histidinol-phosphate aminotransferase subfamily. As to quaternary structure, homodimer. It depends on pyridoxal 5'-phosphate as a cofactor.

It catalyses the reaction L-histidinol phosphate + 2-oxoglutarate = 3-(imidazol-4-yl)-2-oxopropyl phosphate + L-glutamate. Its pathway is amino-acid biosynthesis; L-histidine biosynthesis; L-histidine from 5-phospho-alpha-D-ribose 1-diphosphate: step 7/9. In Rhizobium meliloti (strain 1021) (Ensifer meliloti), this protein is Histidinol-phosphate aminotransferase 1 (hisC1).